Reading from the N-terminus, the 260-residue chain is Ras-related protein Rab-32B (260 aa).

A disordered region spans residues Phe11–Val50. Residues Ser21–Asn49 show a composition bias toward low complexity. Residue Gly66–Ser73 coordinates GTP. Positions Tyr88–Phe96 match the Effector region motif. Residues Asp115–His119 and Asn177–Asp180 each bind GTP. Residues Thr231–Lys260 form a disordered region. Positions Asn248–Lys260 are enriched in basic and acidic residues. S-geranylgeranyl cysteine attachment occurs at residues Cys258 and Cys259.

This sequence belongs to the small GTPase superfamily. Rab family.

The polypeptide is Ras-related protein Rab-32B (rab32B) (Dictyostelium discoideum (Social amoeba)).